The primary structure comprises 505 residues: MAQVINTNSLSLLTQNNLNKSQSSLSSAIERLSSGLRINSAKDDAAGQAIANRFTSNIKGLTQASRNANDGISIAQTTEGALNEINNNLQRVRELSVQATNGTNSDSDLKSIQDEIQQRLEEIDRVSNQTQFNGVKVLSQDNQMKIQVGANDGETITIDLQKIDVKSLGLDGFNVNGPKEATVGDLKSSFKNVTGYDTYAAGANKYRVDINSGAVVTDDAAPDKVYVNAANGQLTTDDAENNTAVNLFKTTKSAAGTDEAKAIAGAIKGGKEGDTFDYKGVTFTIDTKTGDDGNGKVSTTINGEKVTLTVADIATGATDVNAATLQSSKNVYTSVVNGQFTFDDKTKNESAKLSDLEANNAVKGESKITVNGAEYTANAAGDKVTLAGKTMFIDKTASGVSTLINEDAAAAKKSTANPLASIDSALSKVDAVRSSLGAIQNRFDSAITNLGNTVTNLNSARSRIEDADYATEVSNMSKAQILQQAGTSVLAQANQVPQNVLSLLR.

The protein belongs to the bacterial flagellin family.

It is found in the secreted. The protein localises to the bacterial flagellum. Functionally, flagellin is the subunit protein which polymerizes to form the filaments of bacterial flagella. This is Flagellin (fliC) from Salmonella montevideo.